The primary structure comprises 336 residues: Fructose-1,6-bisphosphatase class 1 (336 aa).

Mg(2+)-binding residues include glutamate 90, aspartate 112, leucine 114, and aspartate 115. Residues 115–118 (DGSS), asparagine 211, and lysine 277 each bind substrate. Position 283 (glutamate 283) interacts with Mg(2+).

Belongs to the FBPase class 1 family. In terms of assembly, homotetramer. Mg(2+) is required as a cofactor.

The protein localises to the cytoplasm. It carries out the reaction beta-D-fructose 1,6-bisphosphate + H2O = beta-D-fructose 6-phosphate + phosphate. The protein operates within carbohydrate biosynthesis; gluconeogenesis. The sequence is that of Fructose-1,6-bisphosphatase class 1 from Pseudomonas savastanoi pv. phaseolicola (strain 1448A / Race 6) (Pseudomonas syringae pv. phaseolicola (strain 1448A / Race 6)).